Here is a 228-residue protein sequence, read N- to C-terminus: Ephrin-A5 (228 aa).

Positions 1–20 (MLHVEMLTLLFLVLWMCVFS) are cleaved as a signal peptide. The Ephrin RBD domain occupies 29–162 (ADRYAVYWNS…KLKVFVRPTN (134 aa)). Residue Asn-37 is glycosylated (N-linked (GlcNAc...) asparagine). Intrachain disulfides connect Cys-62–Cys-102 and Cys-90–Cys-151. An N-linked (GlcNAc...) asparagine; atypical glycan is attached at Asn-162. Positions 186-205 (EPADDTVHESAEPSRGENAA) are disordered. Over residues 190–200 (DTVHESAEPSR) the composition is skewed to basic and acidic residues. Asn-203 carries GPI-anchor amidated asparagine lipidation. Positions 204–228 (AAQTPRIPSRLLAILLFLLAMLLTL) are cleaved as a propeptide — removed in mature form.

Belongs to the ephrin family. Binds to the receptor tyrosine kinases EPHA2, EPHA3 and EPHB1. Forms a ternary EFNA5-EPHA3-ADAM10 complex mediating EFNA5 extracellular domain shedding by ADAM10 which regulates the EFNA5-EPHA3 complex internalization and function. Binds to EPHB2. Interacts with EPHA8; activates EPHA8. Expressed in myogenic progenitor cells.

It is found in the cell membrane. Its subcellular location is the membrane. The protein resides in the caveola. In terms of biological role, cell surface GPI-bound ligand for Eph receptors, a family of receptor tyrosine kinases which are crucial for migration, repulsion and adhesion during neuronal, vascular and epithelial development. Binds promiscuously Eph receptors residing on adjacent cells, leading to contact-dependent bidirectional signaling into neighboring cells. The signaling pathway downstream of the receptor is referred to as forward signaling while the signaling pathway downstream of the ephrin ligand is referred to as reverse signaling. Induces compartmentalized signaling within a caveolae-like membrane microdomain when bound to the extracellular domain of its cognate receptor. This signaling event requires the activity of the Fyn tyrosine kinase. Activates the EPHA3 receptor to regulate cell-cell adhesion and cytoskeletal organization. With the receptor EPHA2 may regulate lens fiber cells shape and interactions and be important for lens transparency maintenance. May function actively to stimulate axon fasciculation. The interaction of EFNA5 with EPHA5 also mediates communication between pancreatic islet cells to regulate glucose-stimulated insulin secretion. Cognate/functional ligand for EPHA7, their interaction regulates brain development modulating cell-cell adhesion and repulsion. This chain is Ephrin-A5 (Efna5), found in Mus musculus (Mouse).